A 599-amino-acid polypeptide reads, in one-letter code: Pentatricopeptide repeat-containing protein At3g62540, mitochondrial (599 aa).

A mitochondrion-targeting transit peptide spans 1 to 99 (MAAAPWLYLS…RGFSSGSSNV (99 aa)). PPR repeat units lie at residues 194–228 (ASRT…GLLT), 230–262 (ETFT…KFKI), 263–293 (GVET…LKER), 297–331 (NMMT…GLKP), 332–366 (DIVA…GPCP), 367–401 (NVRS…GLQP), 402–436 (DAAV…GHPP), 437–471 (DGKT…EIEP), 472–506 (SIHT…GICP), and 507–541 (DDNS…GMKT).

Belongs to the PPR family. P subfamily.

It is found in the mitochondrion. The chain is Pentatricopeptide repeat-containing protein At3g62540, mitochondrial from Arabidopsis thaliana (Mouse-ear cress).